Reading from the N-terminus, the 267-residue chain is tRNA pseudouridine synthase A (267 aa).

Aspartate 54 functions as the Nucleophile in the catalytic mechanism. Tyrosine 112 contacts substrate.

This sequence belongs to the tRNA pseudouridine synthase TruA family. Homodimer.

It carries out the reaction uridine(38/39/40) in tRNA = pseudouridine(38/39/40) in tRNA. Functionally, formation of pseudouridine at positions 38, 39 and 40 in the anticodon stem and loop of transfer RNAs. This Bordetella avium (strain 197N) protein is tRNA pseudouridine synthase A.